The sequence spans 99 residues: Aspartyl/glutamyl-tRNA(Asn/Gln) amidotransferase subunit C (99 aa).

It belongs to the GatC family. As to quaternary structure, heterotrimer of A, B and C subunits.

It catalyses the reaction L-glutamyl-tRNA(Gln) + L-glutamine + ATP + H2O = L-glutaminyl-tRNA(Gln) + L-glutamate + ADP + phosphate + H(+). It carries out the reaction L-aspartyl-tRNA(Asn) + L-glutamine + ATP + H2O = L-asparaginyl-tRNA(Asn) + L-glutamate + ADP + phosphate + 2 H(+). Its function is as follows. Allows the formation of correctly charged Asn-tRNA(Asn) or Gln-tRNA(Gln) through the transamidation of misacylated Asp-tRNA(Asn) or Glu-tRNA(Gln) in organisms which lack either or both of asparaginyl-tRNA or glutaminyl-tRNA synthetases. The reaction takes place in the presence of glutamine and ATP through an activated phospho-Asp-tRNA(Asn) or phospho-Glu-tRNA(Gln). In Cupriavidus metallidurans (strain ATCC 43123 / DSM 2839 / NBRC 102507 / CH34) (Ralstonia metallidurans), this protein is Aspartyl/glutamyl-tRNA(Asn/Gln) amidotransferase subunit C.